The primary structure comprises 478 residues: Protein nucleotidyltransferase YdiU (478 aa).

ATP contacts are provided by glycine 83, glycine 85, arginine 86, lysine 106, aspartate 118, glycine 119, arginine 169, and arginine 176. Aspartate 245 acts as the Proton acceptor in catalysis. Asparagine 246 and aspartate 255 together coordinate Mg(2+). Aspartate 255 lines the ATP pocket.

The protein belongs to the SELO family. The cofactor is Mg(2+). Mn(2+) is required as a cofactor.

The catalysed reaction is L-seryl-[protein] + ATP = 3-O-(5'-adenylyl)-L-seryl-[protein] + diphosphate. It catalyses the reaction L-threonyl-[protein] + ATP = 3-O-(5'-adenylyl)-L-threonyl-[protein] + diphosphate. It carries out the reaction L-tyrosyl-[protein] + ATP = O-(5'-adenylyl)-L-tyrosyl-[protein] + diphosphate. The enzyme catalyses L-histidyl-[protein] + UTP = N(tele)-(5'-uridylyl)-L-histidyl-[protein] + diphosphate. The catalysed reaction is L-seryl-[protein] + UTP = O-(5'-uridylyl)-L-seryl-[protein] + diphosphate. It catalyses the reaction L-tyrosyl-[protein] + UTP = O-(5'-uridylyl)-L-tyrosyl-[protein] + diphosphate. Functionally, nucleotidyltransferase involved in the post-translational modification of proteins. It can catalyze the addition of adenosine monophosphate (AMP) or uridine monophosphate (UMP) to a protein, resulting in modifications known as AMPylation and UMPylation. The protein is Protein nucleotidyltransferase YdiU of Exiguobacterium sp. (strain ATCC BAA-1283 / AT1b).